Consider the following 77-residue polypeptide: Large ribosomal subunit protein bL28 (77 aa).

The protein belongs to the bacterial ribosomal protein bL28 family.

The polypeptide is Large ribosomal subunit protein bL28 (Delftia acidovorans (strain DSM 14801 / SPH-1)).